The following is a 223-amino-acid chain: UPF0502 protein Avin_04790 (223 aa).

Belongs to the UPF0502 family.

The sequence is that of UPF0502 protein Avin_04790 from Azotobacter vinelandii (strain DJ / ATCC BAA-1303).